The following is a 190-amino-acid chain: Potassium-transporting ATPase KdpC subunit (190 aa).

The helical transmembrane segment at 10–30 (TFIFLLLITGGVYPLLTTALG) threads the bilayer.

It belongs to the KdpC family. In terms of assembly, the system is composed of three essential subunits: KdpA, KdpB and KdpC.

Its subcellular location is the cell inner membrane. Its function is as follows. Part of the high-affinity ATP-driven potassium transport (or Kdp) system, which catalyzes the hydrolysis of ATP coupled with the electrogenic transport of potassium into the cytoplasm. This subunit acts as a catalytic chaperone that increases the ATP-binding affinity of the ATP-hydrolyzing subunit KdpB by the formation of a transient KdpB/KdpC/ATP ternary complex. This chain is Potassium-transporting ATPase KdpC subunit, found in Escherichia coli O9:H4 (strain HS).